The primary structure comprises 439 residues: MDLNGFLLDEEGAFSLSGFQEFTFLPRHQQLSERVRKRLYYGWDKECTLDNLSSPVADIAVELLQKVAPSPIRRLQKKYVSHVSREACISPCSMMLALVYIERLRHRNPEYLQQISSSDLFLISMMVASKYLYDEGEEEEVFNDEWGAAGKVDVQTMNTLEMNFLSAIDWSLYTDPRELFEVLSWLEGRVAEKQGMWRGWFTYTDLCVLMEQSMWQQALGHFYQQVVKLACLLGVVYLTGFAAVFTSIAVVHRAVCTRSTSITALRPALIPVESGCQLGAQPALAPEQPQPKLPDVSPPSSTHCLGENETAEELRRGGVTATALYLWGSVMTALSYVKAPDIALHKSPLQAPLRKVPTACERSNRTAPVTAPNQPGPFGLAVLLAPPALHCHTCSAAARPTWDATPNHRKDWLDPLGLRQCFLHAALDLGRIKSFIFPS.

The helical transmembrane segment at 231–251 (CLLGVVYLTGFAAVFTSIAVV) threads the bilayer. Residues 283–302 (ALAPEQPQPKLPDVSPPSST) form a disordered region.

This sequence belongs to the CNPPD1 family.

It localises to the membrane. This chain is Protein CNPPD1 (CNPPD1), found in Gallus gallus (Chicken).